The sequence spans 1286 residues: Protein patched (1286 aa).

The Cytoplasmic segment spans residues 1-76 (MDRDSLPRVP…GSSVQKHAGK (76 aa)). Residues 77 to 92 (VLFVAILVLSTFCVGL) traverse the membrane as a helical segment. Residues 93–427 (KSAQIHSKVH…DDILAKFSHP (335 aa)) are Extracellular-facing. Asparagine 142, asparagine 298, asparagine 335, and asparagine 388 each carry an N-linked (GlcNAc...) asparagine glycan. The helical transmembrane segment at 428 to 448 (SALSIVIGVAVTVLYAFCTLL) threads the bilayer. Residues 428–583 (SALSIVIGVA…LLVFPAMISL (156 aa)) form the SSD domain. Residues 449–465 (RWRDPVRGQSSVGVAGV) are Cytoplasmic-facing. Residues 466–486 (LLMCFSTAAGLGLSALLGIVF) traverse the membrane as a helical segment. The Extracellular portion of the chain corresponds to 487 to 492 (NAASTQ). A helical transmembrane segment spans residues 493–511 (VVPFLALGLGVDHIFMLTA). At 512-532 (AYAESNRREQTKLILKKVGPS) the chain is on the cytoplasmic side. Residues 533 to 553 (ILFSACSTAGSFFAAAFIPVP) form a helical membrane-spanning segment. Topologically, residues 554–562 (ALKVFCLQA) are extracellular. A helical membrane pass occupies residues 563–583 (AIVMCSNLAAALLVFPAMISL). The Cytoplasmic portion of the chain corresponds to 584 to 677 (DLRRRTAGRA…QHYTPFLMRS (94 aa)). The chain crosses the membrane as a helical span at residues 678–699 (WVKFLTVMGFLAALISSLYAST). At 700 to 931 (RLQDGLDIID…IRDLSVKYEG (232 aa)) the chain is on the extracellular side. N-linked (GlcNAc...) asparagine glycosylation is present at asparagine 807. A helical membrane pass occupies residues 932-952 (FGLPNYPSGIPFIFWEQYMTL). The Cytoplasmic portion of the chain corresponds to 953 to 955 (RSS). The helical transmembrane segment at 956–976 (LAMILACVLLAALVLVSLLLL) threads the bilayer. Residues 977-1007 (SVWAAVLVILSVLASLAQIFGAMTLLGIKLS) lie on the Extracellular side of the membrane. The helical transmembrane segment at 1008 to 1028 (AIPAVILILSVGMMLCFNVLI) threads the bilayer. Residues 1029-1056 (SLGFMTSVGNRQRRVQLSMQMSLGPLVH) are Cytoplasmic-facing. The chain crosses the membrane as a helical span at residues 1057 to 1077 (GMLTSGVAVFMLSTSPFEFVI). The Extracellular portion of the chain corresponds to 1078–1082 (RHFCW). A helical membrane pass occupies residues 1083–1103 (LLLVVLCVGACNSLLVFPILL). Topologically, residues 1104–1286 (SMVGPEAELV…RAVRSYNFTS (183 aa)) are cytoplasmic. The tract at residues 1116–1237 (EHPDRISTPS…PPPFPTAYPP (122 aa)) is disordered. Polar residues-rich tracts occupy residues 1141-1152 (VQGSRSSRGSCQ) and 1165-1191 (PSLT…NDWT). Low complexity predominate over residues 1199–1216 (PASYAAPPPAYHKAAAQQ). Over residues 1224–1235 (PTTPPPPFPTAY) the composition is skewed to pro residues.

Belongs to the patched family. In terms of assembly, interacts (via C-terminal cytoplasmic region) with CG5504/l(2)tid; the interaction is probably direct. Interacts with hh/hedgehog.

The protein resides in the membrane. Functionally, segmentation polarity protein. Acts as a receptor for the hedgehog protein (hh). Associates with the smoothened protein (SMO) to transduce the hedgehog signal leading to the activation of wingless, decapentaplegic and patched itself. Participates in cell interactions that establish pattern within the segment and the imaginal disks during development. In the absence of HH, represses the constitutive signaling activity of smo through fused (FU). This Drosophila melanogaster (Fruit fly) protein is Protein patched.